Consider the following 220-residue polypeptide: Uracil-DNA glycosylase (220 aa).

The active-site Proton acceptor is Asp60.

The protein belongs to the uracil-DNA glycosylase (UDG) superfamily. UNG family.

It localises to the cytoplasm. The enzyme catalyses Hydrolyzes single-stranded DNA or mismatched double-stranded DNA and polynucleotides, releasing free uracil.. Its function is as follows. Excises uracil residues from the DNA which can arise as a result of misincorporation of dUMP residues by DNA polymerase or due to deamination of cytosine. This Francisella tularensis subsp. tularensis (strain FSC 198) protein is Uracil-DNA glycosylase.